The sequence spans 394 residues: 1-deoxy-D-xylulose 5-phosphate reductoisomerase (394 aa).

Residues Thr10, Gly11, Ser12, Ile13, Gly38, Arg39, Asn40, and Asn123 each coordinate NADPH. Residue Lys124 participates in 1-deoxy-D-xylulose 5-phosphate binding. Residue Glu125 coordinates NADPH. Asp149 serves as a coordination point for Mn(2+). Ser150, Glu151, Ser175, and His198 together coordinate 1-deoxy-D-xylulose 5-phosphate. Mn(2+) is bound at residue Glu151. NADPH is bound at residue Gly204. 1-deoxy-D-xylulose 5-phosphate contacts are provided by Ser211, Asn216, Lys217, and Glu220. Glu220 is a binding site for Mn(2+).

Belongs to the DXR family. Mg(2+) is required as a cofactor. The cofactor is Mn(2+).

It carries out the reaction 2-C-methyl-D-erythritol 4-phosphate + NADP(+) = 1-deoxy-D-xylulose 5-phosphate + NADPH + H(+). It participates in isoprenoid biosynthesis; isopentenyl diphosphate biosynthesis via DXP pathway; isopentenyl diphosphate from 1-deoxy-D-xylulose 5-phosphate: step 1/6. Its function is as follows. Catalyzes the NADPH-dependent rearrangement and reduction of 1-deoxy-D-xylulose-5-phosphate (DXP) to 2-C-methyl-D-erythritol 4-phosphate (MEP). The protein is 1-deoxy-D-xylulose 5-phosphate reductoisomerase of Cereibacter sphaeroides (strain ATCC 17025 / ATH 2.4.3) (Rhodobacter sphaeroides).